Consider the following 719-residue polypeptide: Polyribonucleotide nucleotidyltransferase (719 aa).

The Mg(2+) site is built by Asp495 and Asp501. A KH domain is found at 562-621; that stretch reads PRRLSFRIDPELIGTVIGPGGRTIKGITERTNTKIDIEDTGIVTVASHDGAAAEEAQKII. The 69-residue stretch at 631 to 699 folds into the S1 motif domain; sequence GEYFDGKVTR…NRGRINLTLR (69 aa). Positions 699–719 are disordered; sequence RGVPQDGSDPQPTVILPIGES.

It belongs to the polyribonucleotide nucleotidyltransferase family. The cofactor is Mg(2+).

It is found in the cytoplasm. The catalysed reaction is RNA(n+1) + phosphate = RNA(n) + a ribonucleoside 5'-diphosphate. Involved in mRNA degradation. Catalyzes the phosphorolysis of single-stranded polyribonucleotides processively in the 3'- to 5'-direction. In Synechococcus sp. (strain RCC307), this protein is Polyribonucleotide nucleotidyltransferase.